Reading from the N-terminus, the 134-residue chain is Small ribosomal subunit protein uS9 (134 aa).

Positions 109-134 (DARRTEPHKPSKSTKGPRAKRQKSYR) are disordered. Residues 118-134 (PSKSTKGPRAKRQKSYR) show a composition bias toward basic residues.

It belongs to the universal ribosomal protein uS9 family.

The chain is Small ribosomal subunit protein uS9 from Methanococcus aeolicus (strain ATCC BAA-1280 / DSM 17508 / OCM 812 / Nankai-3).